The following is a 299-amino-acid chain: HTH-type transcriptional regulator ArgP (299 aa).

The region spanning 4–60 (LDYKLLLALDAVMQEQNFERAAQRLHITQSAISQRIKQLEQQFAEPLLIRSQPLQAT) is the HTH lysR-type domain. The segment at residues 21–40 (FERAAQRLHITQSAISQRIK) is a DNA-binding region (H-T-H motif).

It belongs to the LysR transcriptional regulatory family. Homodimer.

Its function is as follows. Controls the transcription of genes involved in arginine and lysine metabolism. The chain is HTH-type transcriptional regulator ArgP from Aeromonas salmonicida.